A 50-amino-acid chain; its full sequence is Small, acid-soluble spore protein K (50 aa).

Residues 1-50 form a disordered region; the sequence is MVRNKAKGFPNQNNNKFEGEPRAKDDYASKRADGSINSHPQERMRASGRR. 2 stretches are compositionally biased toward basic and acidic residues: residues 17–33 and 40–50; these read FEGE…KRAD and PQERMRASGRR.

It belongs to the SspK family.

It is found in the spore core. In Bacillus velezensis (strain DSM 23117 / BGSC 10A6 / LMG 26770 / FZB42) (Bacillus amyloliquefaciens subsp. plantarum), this protein is Small, acid-soluble spore protein K.